The chain runs to 133 residues: Small ribosomal subunit protein bS16 (133 aa).

The tract at residues glutamate 99–alanine 133 is disordered. The span at arginine 109–lysine 123 shows a compositional bias: basic residues. The span at lysine 124 to alanine 133 shows a compositional bias: basic and acidic residues.

The protein belongs to the bacterial ribosomal protein bS16 family.

This Chlorobium limicola (strain DSM 245 / NBRC 103803 / 6330) protein is Small ribosomal subunit protein bS16.